Reading from the N-terminus, the 212-residue chain is Small ribosomal subunit protein uS4c (212 aa).

Residues 89–152 (MRLDNIIFRL…RSRALVDKNL (64 aa)) enclose the S4 RNA-binding domain.

Belongs to the universal ribosomal protein uS4 family. In terms of assembly, part of the 30S ribosomal subunit. Contacts protein S5. The interaction surface between S4 and S5 is involved in control of translational fidelity.

It is found in the plastid. Its subcellular location is the chloroplast. In terms of biological role, one of the primary rRNA binding proteins, it binds directly to 16S rRNA where it nucleates assembly of the body of the 30S subunit. With S5 and S12 plays an important role in translational accuracy. The sequence is that of Small ribosomal subunit protein uS4c (rps4) from Staurastrum punctulatum (Green alga).